The sequence spans 329 residues: Pantothenate kinase (329 aa).

Residues 1 to 21 (MISPVPSIPRSAHRQRPEATP) form a disordered region. 107-114 (GSVAVGKS) contacts ATP.

It belongs to the prokaryotic pantothenate kinase family.

It localises to the cytoplasm. The catalysed reaction is (R)-pantothenate + ATP = (R)-4'-phosphopantothenate + ADP + H(+). Its pathway is cofactor biosynthesis; coenzyme A biosynthesis; CoA from (R)-pantothenate: step 1/5. In Streptomyces coelicolor (strain ATCC BAA-471 / A3(2) / M145), this protein is Pantothenate kinase (coaA).